We begin with the raw amino-acid sequence, 226 residues long: Cytidylate kinase (226 aa).

12 to 20 (GPSGAGKGT) is an ATP binding site.

This sequence belongs to the cytidylate kinase family. Type 1 subfamily.

The protein resides in the cytoplasm. The catalysed reaction is CMP + ATP = CDP + ADP. It carries out the reaction dCMP + ATP = dCDP + ADP. The chain is Cytidylate kinase from Xanthomonas campestris pv. campestris (strain B100).